The chain runs to 239 residues: Probable transcriptional regulatory protein BT9727_0453 (239 aa).

It belongs to the TACO1 family. YeeN subfamily.

The protein localises to the cytoplasm. The protein is Probable transcriptional regulatory protein BT9727_0453 of Bacillus thuringiensis subsp. konkukian (strain 97-27).